The sequence spans 60 residues: Large ribosomal subunit protein uL30 (60 aa).

This sequence belongs to the universal ribosomal protein uL30 family. In terms of assembly, part of the 50S ribosomal subunit.

This is Large ribosomal subunit protein uL30 from Dehalococcoides mccartyi (strain CBDB1).